A 107-amino-acid polypeptide reads, in one-letter code: MYIKGRLIFFFVVLVIALCSVLILLIIKISVWKDEPFHLSDAKEIECLGSCEIKNTNQKIHFFSIKENLFEEKGDIAGILNEDEQKVADKSIFIVILDDEKGIANEE.

The first 20 residues, M1–S20, serve as a signal peptide directing secretion.

This is an uncharacterized protein from Listeria monocytogenes serovar 1/2a (strain ATCC BAA-679 / EGD-e).